A 256-amino-acid chain; its full sequence is DNA polymerase sliding clamp 2 (256 aa).

Belongs to the PCNA family. Homotrimer. The subunits circularize to form a toroid; DNA passes through its center. Replication factor C (RFC) is required to load the toroid on the DNA.

Its function is as follows. Sliding clamp subunit that acts as a moving platform for DNA processing. Responsible for tethering the catalytic subunit of DNA polymerase and other proteins to DNA during high-speed replication. The chain is DNA polymerase sliding clamp 2 from Pyrobaculum aerophilum (strain ATCC 51768 / DSM 7523 / JCM 9630 / CIP 104966 / NBRC 100827 / IM2).